The following is a 31-amino-acid chain: Cuticle protein 54 (31 aa).

Repeat copies occupy residues 7 to 10 (AAPA) and 13 to 17 (AAPAI).

Functionally, component of the cuticle of migratory locust which contains more than 100 different structural proteins. This is Cuticle protein 54 from Locusta migratoria (Migratory locust).